Here is a 5068-residue protein sequence, read N- to C-terminus: Protein piccolo (5068 aa).

The span at 1-20 (MGNEASLEGEGLPEGLAAAA) shows a compositional bias: low complexity. 2 disordered regions span residues 1 to 143 (MGNE…DFKE) and 173 to 524 (FDLI…QAPA). A compositionally biased stretch (pro residues) spans 93–102 (PGKPPDPGRP). Composition is skewed to basic and acidic residues over residues 111 to 122 (RTTDTFRSEQKL), 133 to 143 (KESKSRTDFKE), and 185 to 199 (ETTK…DQGK). Phosphoserine is present on S212. The span at 232 to 241 (PSKSVSSQQA) shows a compositional bias: polar residues. A compositionally biased stretch (low complexity) spans 252-279 (AKPSQQSPAQTPAQQAKPVAQQPGPAKA). Over residues 319-334 (TSLQQPGPKSLAQTPG) the composition is skewed to polar residues. Pro residues-rich tracts occupy residues 391 to 407 (PTKP…PQPQ) and 416 to 487 (PQQP…PQPQ). The tract at residues 401–500 (PAKPQPQQPV…LGKPSAQQPS (100 aa)) is 10 X 10 AA tandem approximate repeats of P-A-K-P-Q-P-Q-Q-P-X. The span at 495-508 (SAQQPSKSISQTVT) shows a compositional bias: polar residues. Residues 515 to 524 (PPTSAAQAPA) are compositionally biased toward low complexity. The C4-type zinc-finger motif lies at 532–556 (CPLCNTTELLLHTPEKANFNTCTEC). Disordered stretches follow at residues 594–867 (AAIP…TVTG), 883–1005 (LIST…TELN), 1057–1345 (LGDM…PSDL), and 1364–1803 (VGEK…SDPE). The segment covering 610–625 (QPATASKSPVPSQQAS) has biased composition (polar residues). The segment covering 626-644 (PKKELPSKQDSPKAPESKK) has biased composition (basic and acidic residues). Residues 709 to 738 (SPSSAAATSKPAILSSQVQAQAQVTTAPPL) show a composition bias toward low complexity. Residues 782–795 (ESKDPVQKKEEPKK) show a composition bias toward basic and acidic residues. Positions 809–830 (VPKGSPTPSGTRPTTGQATPQS) are enriched in low complexity. Phosphoserine occurs at positions 844 and 856. Polar residues-rich tracts occupy residues 856–865 (SQPTTPQETV) and 883–893 (LISTAGQQAPH). Position 860 is a phosphothreonine (T860). A C4-type zinc finger spans residues 997-1020 (CPLCRTELNVGSQDPPNFNTCTEC). Residues 1073 to 1085 (SPVPAPAEPPPQK) show a composition bias toward pro residues. Residues 1097-1116 (KETEVKAETEKQIPEKETPS) are compositionally biased toward basic and acidic residues. T1120 carries the phosphothreonine modification. Composition is skewed to basic and acidic residues over residues 1144 to 1165 (PEKK…KKPP), 1172 to 1186 (LEEK…KLPP), 1244 to 1253 (PKDRQKESRD), and 1262 to 1283 (TAKE…DKSD). The span at 1290-1306 (PKSPQGLSDTGYSSDGI) shows a compositional bias: polar residues. Phosphoserine occurs at positions 1292, 1302, 1303, 1332, 1334, 1337, 1338, and 1341. The span at 1319–1333 (SDEKDLLKGLKKDSF) shows a compositional bias: basic and acidic residues. A compositionally biased stretch (low complexity) spans 1334–1343 (SQESSPSSPS). Over residues 1374–1392 (PQKVSPEQPQDQQKTQTPS) the composition is skewed to polar residues. The span at 1405–1444 (KESQEKKVTSKKDSAQGFPSRKEHKENPELVDDLSPRRAS) shows a compositional bias: basic and acidic residues. Phosphoserine is present on residues S1439, S1451, S1452, S1454, S1457, S1481, S1484, S1505, and S1507. Residues 1499 to 1511 (SADEDASGSEDEE) show a composition bias toward acidic residues. Position 1552 is a phosphothreonine (T1552). 3 positions are modified to phosphoserine: S1553, S1563, and S1575. Positions 1566–1575 (DEDDETFDES) are enriched in acidic residues. The segment covering 1576 to 1587 (PELKFRETKSQE) has biased composition (basic and acidic residues). Over residues 1606 to 1624 (ELNSTVTDKYSAESSQKKT) the composition is skewed to polar residues. The segment covering 1628-1638 (FDEEPELEMES) has biased composition (acidic residues). S1638 carries the phosphoserine modification. T1640 carries the phosphothreonine modification. S1642 and S1647 each carry phosphoserine. Polar residues predominate over residues 1650-1667 (EGSSSLHASSFTPGTSPT). The segment covering 1707–1720 (DSSEEEELREEEEL) has biased composition (acidic residues). Phosphoserine occurs at positions 1708 and 1709. A compositionally biased stretch (basic and acidic residues) spans 1721 to 1734 (LKEQEKQRELEQQQ). T1760 is modified (phosphothreonine). A Phosphoserine modification is found at S1766. The span at 1775–1790 (EELRQAAEMEELHRSS) shows a compositional bias: basic and acidic residues. S1795, S1800, S1808, and S1829 each carry phosphoserine. Disordered regions lie at residues 2104 to 2126 (PSES…ISSV) and 2261 to 2377 (EAEL…AAAA). Positions 2109-2126 (TSVPPSDTPSLTSSISSV) are enriched in low complexity. Positions 2277–2291 (TPSSQTKEQPGSPHS) are enriched in polar residues. The span at 2334–2368 (QPPPPPPPPPPPPPPPPPPPPPPLPPATSPKPPTY) shows a compositional bias: pro residues. At S2495 the chain carries Phosphoserine. O-linked (GlcNAc) threonine glycosylation occurs at T2686. An O-linked (GlcNAc) serine glycan is attached at S2960. T2998 carries the phosphothreonine modification. Disordered stretches follow at residues 3334 to 3443 (KEEK…SKVS) and 3490 to 3556 (KGGS…LYSP). Residue S3358 is modified to Phosphoserine. Positions 3361–3370 (DDPRNLKKIV) are enriched in basic and acidic residues. Residue S3372 is modified to Phosphoserine. Phosphothreonine is present on residues T3376 and T3403. Residues 3403–3412 (TDDEDQDEWD) are compositionally biased toward acidic residues. Positions 3495-3507 (GCQTETDPDTQSP) are enriched in polar residues. Phosphoserine occurs at positions 3506, 3514, 3545, 3549, 3555, 3558, 3561, 3582, 3608, 3610, and 3616. Disordered regions lie at residues 3576–3679 (PLPD…RRRM) and 3760–3797 (DYMS…QFIP). Polar residues-rich tracts occupy residues 3636 to 3645 (KGSQTTSGTQ) and 3661 to 3673 (STGT…TMGT). The residue at position 3763 (S3763) is a Phosphoserine. The span at 3773-3785 (SRVESQHGIERPR) shows a compositional bias: basic and acidic residues. The segment covering 3787–3797 (APQTEFSQFIP) has biased composition (polar residues). Phosphoserine is present on residues S4016, S4042, and S4132. Disordered stretches follow at residues 4207–4231 (ADKP…GLDL) and 4254–4273 (VSFG…LPIS). Residues 4210-4231 (PYSSGSRSRPSSRPSSVYGLDL) are compositionally biased toward low complexity. The segment covering 4257 to 4273 (GHSSSSARTKPTSLPIS) has biased composition (polar residues). A phosphoserine mark is found at S4286, S4290, S4293, S4322, and S4358. Residues 4317–4339 (RDQFGSSHSLPEVQQHMREESRT) form a disordered region. A PDZ domain is found at 4424-4518 (RIKITRDSKD…EAEICVRLDL (95 aa)). Positions 4574-4620 (KGAHAHSGPTSAGSSSVPSPGQPGSPSVSKKKHGGSKPTDVSKTASH) are disordered. Residues 4578–4601 (AHSGPTSAGSSSVPSPGQPGSPSV) are compositionally biased toward low complexity. Residue S4592 is modified to Phosphoserine. The C2 1 domain maps to 4622-4751 (ITGEIQLQIN…SHLDNTPRWY (130 aa)). Residues D4651 and D4657 each contribute to the Ca(2+) site. A Phosphoserine modification is found at S4706. 4 residues coordinate Ca(2+): D4721, D4723, S4726, and D4729. Disordered stretches follow at residues 4758 to 4834 (ESIE…SVAQ) and 4857 to 4891 (QPTK…SEGS). Composition is skewed to low complexity over residues 4766–4778 (HSSQ…PKPS) and 4805–4815 (SSPGSSKSSSE). The span at 4823 to 4834 (PSRSQSKTSVAQ) shows a compositional bias: polar residues. Positions 4870-4891 (SVSTGSSGSSVGSGYSVDSEGS) are enriched in low complexity. The C2 2 domain occupies 4933–5058 (VMGEIKLALK…DLRKRIVNWH (126 aa)).

Interacts with BSN, ERC2/CAST1, RIMS1 and UNC13A. Interacts (via C-terminus) with TRIO (via N-terminus). Interacts with CTBP1. Interacts with SIAH1; this interaction negatively regulates SIAH1 E3 ligase activity. Directly interacts with GIT1 and GIT2. The cofactor is Ca(2+). In terms of tissue distribution, highly expressed in brain. Moderately expressed in pituitary gland and pancreatic islets. Low levels found in stomach.

It is found in the presynaptic active zone. In terms of biological role, scaffold protein of the presynaptic cytomatrix at the active zone (CAZ) which is the place in the synapse where neurotransmitter is released. After synthesis, participates in the formation of Golgi-derived membranous organelles termed Piccolo-Bassoon transport vesicles (PTVs) that are transported along axons to sites of nascent synaptic contacts. At the presynaptic active zone, regulates the spatial organization of synaptic vesicle cluster, the protein complexes that execute membrane fusion and compensatory endocytosis. Organizes as well the readily releasable pool of synaptic vesicles and safeguards a fraction of them to be not immediately available for action potential-induced release. Also functions in processes other than assembly such as the regulation of specific presynaptic protein ubiquitination by interacting with SIAH1 or the regulation of presynaptic autophagy. Also mediates synapse to nucleus communication leading to reconfiguration of gene expression by associating with the transcriptional corepressor CTBP1 and by subsequently reducing the size of its pool available for nuclear import. This Mus musculus (Mouse) protein is Protein piccolo.